A 618-amino-acid polypeptide reads, in one-letter code: Sulfite reductase [NADPH] flavoprotein alpha-component (618 aa).

The Flavodoxin-like domain maps to 64–202 (VTLISASQTG…QAQQWRQQVV (139 aa)). FMN contacts are provided by residues 70–75 (SQTGNA), 117–120 (STQG), and 153–162 (LGDTSYEHFC). The region spanning 253–467 (TAPLTAQLSV…IEHNDNFRLP (215 aa)) is the FAD-binding FR-type domain. FAD is bound by residues threonine 341, lysine 375, 405-408 (RLYS), 423-425 (TVG), tyrosine 429, and 438-441 (GGAS). Residues 538–539 (SR), 544–548 (KIYVQ), and aspartate 580 contribute to the NADP(+) site. Tyrosine 618 provides a ligand contact to FAD.

It belongs to the NADPH-dependent sulphite reductase flavoprotein subunit CysJ family. This sequence in the N-terminal section; belongs to the flavodoxin family. In the C-terminal section; belongs to the flavoprotein pyridine nucleotide cytochrome reductase family. Alpha(8)-beta(8). The alpha component is a flavoprotein, the beta component is a hemoprotein. FAD serves as cofactor. It depends on FMN as a cofactor.

It catalyses the reaction hydrogen sulfide + 3 NADP(+) + 3 H2O = sulfite + 3 NADPH + 4 H(+). It functions in the pathway sulfur metabolism; hydrogen sulfide biosynthesis; hydrogen sulfide from sulfite (NADPH route): step 1/1. In terms of biological role, component of the sulfite reductase complex that catalyzes the 6-electron reduction of sulfite to sulfide. This is one of several activities required for the biosynthesis of L-cysteine from sulfate. The flavoprotein component catalyzes the electron flow from NADPH -&gt; FAD -&gt; FMN to the hemoprotein component. The sequence is that of Sulfite reductase [NADPH] flavoprotein alpha-component from Yersinia pseudotuberculosis serotype I (strain IP32953).